A 1037-amino-acid polypeptide reads, in one-letter code: Receptor kinase-like protein Xa21 (1037 aa).

A signal peptide spans 1–24; that stretch reads MARSPTSVMISSLLLLLLIGPASS. Residues 25–665 lie on the Extracellular side of the membrane; the sequence is DDAAAAAAAR…LLENRKHFPV (641 aa). Residues Asn-66, Asn-101, and Asn-112 are each glycosylated (N-linked (GlcNAc...) asparagine). LRR repeat units lie at residues 89 to 112, 113 to 137, 138 to 161, 163 to 185, 187 to 210, 211 to 234, 236 to 259, 260 to 283, 285 to 308, 310 to 331, and 333 to 355; these read PHRVVKLLLRSSNLSGIISPSLGN, LSFLRELDLSDNYLSGEIPPELSRL, SRLQLLELSGNSIQGSIPAAIGAC, KLTSLDLSHNQLRGMIPREIGAS, KHLSNLYLHTNGLSGEIPSALGNL, TSLQYFDLSCNRLSGAIPSSLGQL, SSLLTMNLRQNNLSGMIPNSIWNL, SSLRAFSVSENKLGGMIPTNAFKT, HLLEVIDMGTNRFYGKIPASVANA, HLTQLQIDGNLFSGIITSGFGR, and RNLTTLYLWRNLFQTREQEDWGF. The N-linked (GlcNAc...) asparagine glycan is linked to Asn-209. N-linked (GlcNAc...) asparagine glycosylation is found at Asn-247 and Asn-258. N-linked (GlcNAc...) asparagine glycosylation occurs at Asn-307. Residues Asn-334, Asn-361, and Asn-385 are each glycosylated (N-linked (GlcNAc...) asparagine). LRR repeat units follow at residues 362-385, 387-411, 412-435, 437-459, 460-482, 483-507, 509-532, 533-556, 557-580, 581-604, and 606-629; these read CSKLQTLDLGENNLGGVLPNSFSN, STSLSFLALDLNKITGSIPKDIGNL, IGLQHLYLCNNNFRGSLPSSLGRL, NLGILVAYENNLSGSIPLAIGNL, TELNILLLGTNKFSGWIPYTLSN, LTNLLSLGLSTNNLSGPIPSELFNI, TLSIMINVSKNNLEGSIPQEIGHL, KNLVEFHAESNRLSGKIPNTLGDC, QLLRYLYLQNNLLSGSIPSALGQL, KGLETLDLSSNNLSGQIPTSLADI, and MLHSLNLSFNSFMGEVPTIGAFAD. N-linked (GlcNAc...) asparagine glycosylation is found at Asn-447, Asn-458, Asn-482, Asn-495, and Asn-515. Asn-592 and Asn-611 each carry an N-linked (GlcNAc...) asparagine glycan. Residues 666–686 traverse the membrane as a helical segment; sequence LPISVSLVAALAILSSLYLLI. Topologically, residues 687-1037 are cytoplasmic; the sequence is TWHKRTKKGA…PVCEGASLEF (351 aa). Residues 689 to 694 carry the Nuclear localization signal motif; that stretch reads HKRTKK. Position 698 is a phosphoserine (Ser-698). A Phosphothreonine modification is found at Thr-700. A Phosphoserine modification is found at Ser-701. Position 717 is a phosphothreonine (Thr-717). The 300-residue stretch at 720–1019 folds into the Protein kinase domain; sequence FAPTNLLGSG…GDIIDELNAI (300 aa). Residues 726-734 and Lys-748 contribute to the ATP site; that span reads LGSGSFGSV. The Proton acceptor role is filled by Asp-854.

This sequence belongs to the protein kinase superfamily. Ser/Thr protein kinase family. In terms of assembly, interacts with WRKY62/XB10 in the nucleus. Interacts with SERK2. Mn(2+) serves as cofactor. It depends on Mg(2+) as a cofactor. In terms of processing, undergoes protein cleavage upon X.oryzae pv. oryzae protein Ax21 detection, thus releasing the processed protein kinase Xa21 chain. Post-translationally, autophosphorylated on serine and threonine residues; these phosphorylation prevents proteolytic degradation.

Its subcellular location is the cell membrane. The protein localises to the endoplasmic reticulum membrane. It localises to the nucleus. The enzyme catalyses L-seryl-[protein] + ATP = O-phospho-L-seryl-[protein] + ADP + H(+). It carries out the reaction L-threonyl-[protein] + ATP = O-phospho-L-threonyl-[protein] + ADP + H(+). Functionally, receptor kinase that detects X.oryzae pv. oryzae protein Ax21 to promote innate immunity. Following X.oryzae pv. oryzae protein Ax21 detection, undergoes cleavage, releasing the processed protein kinase Xa21 chain. In terms of biological role, the processed protein kinase Xa21 chain released by protein cleavage after X.oryzae pv. oryzae protein Ax21 detection translocates into the nucleus where it can bind and regulate WRKY62, a transcription factor. Confers resistance to the bacterial pathogen X.oryzae pv. oryzae (Xoo). This is Receptor kinase-like protein Xa21 from Oryza sativa subsp. japonica (Rice).